We begin with the raw amino-acid sequence, 641 residues long: Threonine--tRNA ligase (641 aa).

Residues Met1 to Ala61 form the TGS domain. The catalytic stretch occupies residues Asp240–Pro538. Zn(2+) is bound by residues Cys334, His385, and His515.

The protein belongs to the class-II aminoacyl-tRNA synthetase family. Homodimer. Zn(2+) serves as cofactor.

It localises to the cytoplasm. The enzyme catalyses tRNA(Thr) + L-threonine + ATP = L-threonyl-tRNA(Thr) + AMP + diphosphate + H(+). Catalyzes the attachment of threonine to tRNA(Thr) in a two-step reaction: L-threonine is first activated by ATP to form Thr-AMP and then transferred to the acceptor end of tRNA(Thr). Also edits incorrectly charged L-seryl-tRNA(Thr). The chain is Threonine--tRNA ligase from Phytoplasma australiense.